Consider the following 61-residue polypeptide: Small ribosomal subunit protein uS14 (61 aa).

Zn(2+)-binding residues include C24, C27, C40, and C43.

Belongs to the universal ribosomal protein uS14 family. Zinc-binding uS14 subfamily. Part of the 30S ribosomal subunit. Contacts proteins S3 and S10. The cofactor is Zn(2+).

In terms of biological role, binds 16S rRNA, required for the assembly of 30S particles and may also be responsible for determining the conformation of the 16S rRNA at the A site. This Clostridium beijerinckii (strain ATCC 51743 / NCIMB 8052) (Clostridium acetobutylicum) protein is Small ribosomal subunit protein uS14.